We begin with the raw amino-acid sequence, 588 residues long: L-fucose isomerase (588 aa).

Catalysis depends on proton acceptor residues Glu-335 and Asp-359. Residues Glu-335, Asp-359, and His-525 each contribute to the Mn(2+) site.

This sequence belongs to the L-fucose isomerase family. Mn(2+) serves as cofactor.

Its subcellular location is the cytoplasm. The enzyme catalyses L-fucose = L-fuculose. It functions in the pathway carbohydrate degradation; L-fucose degradation; L-lactaldehyde and glycerone phosphate from L-fucose: step 1/3. Its function is as follows. Converts the aldose L-fucose into the corresponding ketose L-fuculose. The chain is L-fucose isomerase from Streptococcus pneumoniae (strain 70585).